The chain runs to 643 residues: Replication protein E1 (643 aa).

The tract at residues 28-58 is disordered; that stretch reads THGQRQVSSDEDEDETETGEDLDFIDNRVPG. The span at 36–51 shows a compositional bias: acidic residues; sequence SDEDEDETETGEDLDF. The Nuclear localization signal signature appears at 84-86; it reads KRK. 2 positions are modified to phosphoserine; by host: Ser90 and Ser103. A Nuclear export signal motif is present at residues 102-111; sequence LSPRLDAISL. Disordered stretches follow at residues 119-138 and 143-181; these read KRRL…TQMV and EEVT…PQSG. Residues 180–346 form a DNA-binding region region; the sequence is SGTDAAGSVL…QTLVGHSMED (167 aa). An SF3 helicase domain is found at 445–595; it reads VEFVSFLAAF…FPFASPGEPL (151 aa). Position 471 to 478 (471 to 478) interacts with ATP; the sequence is GPADTGKS. A Glycyl lysine isopeptide (Lys-Gly) (interchain with G-Cter in SUMO) cross-link involves residue Lys552. Residues 617–643 are disordered; it reads NSPEEQDDNGNTGEPFRCVPGDVARTV.

Belongs to the papillomaviridae E1 protein family. Can form hexamers. Interacts with E2 protein; this interaction increases E1 DNA binding specificity. Interacts with host DNA polymerase subunit POLA2. Interacts with host single stranded DNA-binding protein RPA1. Interacts with host TOP1; this interaction stimulates the enzymatic activity of TOP1. Post-translationally, phosphorylated. Sumoylated.

Its subcellular location is the host nucleus. It catalyses the reaction Couples ATP hydrolysis with the unwinding of duplex DNA by translocating in the 3'-5' direction.. It carries out the reaction ATP + H2O = ADP + phosphate + H(+). ATP-dependent DNA 3'-5' helicase required for initiation of viral DNA replication. It forms a complex with the viral E2 protein. The E1-E2 complex binds to the replication origin which contains binding sites for both proteins. During the initial step, a dimer of E1 interacts with a dimer of protein E2 leading to a complex that binds the viral origin of replication with high specificity. Then, a second dimer of E1 displaces the E2 dimer in an ATP-dependent manner to form the E1 tetramer. Following this, two E1 monomers are added to each half of the site, which results in the formation of two E1 trimers on the viral ori. Subsequently, two hexamers will be created. The double hexamer acts as a bi-directional helicase machinery and unwinds the viral DNA and then recruits the host DNA polymerase to start replication. The polypeptide is Replication protein E1 (Human papillomavirus type 2a).